We begin with the raw amino-acid sequence, 662 residues long: ATP-dependent zinc metalloprotease FtsH (662 aa).

Residues 1–15 are compositionally biased toward basic and acidic residues; sequence MSENPVKRPGKDGSR. The segment at 1-35 is disordered; sequence MSENPVKRPGKDGSRNKFKPVQEEGGTPGWFRSKG. Residues 1-39 are Cytoplasmic-facing; sequence MSENPVKRPGKDGSRNKFKPVQEEGGTPGWFRSKGESPQ. The helical transmembrane segment at 40-60 threads the bilayer; that stretch reads GKFPGFLLFLMAGLLMLFVFL. Topologically, residues 61–154 are periplasmic; sequence RFFSGTDAPE…LKVEKGSSDL (94 aa). The chain crosses the membrane as a helical span at residues 155-175; it reads NTFLALFAPWIIFAALYFFLF. Residues 176 to 662 are Cytoplasmic-facing; it reads RRMSGQNGAQ…QGALPNPVTA (487 aa). 250–257 lines the ATP pocket; sequence GPPGTGKT. His472 is a binding site for Zn(2+). The active site involves Glu473. Zn(2+) is bound by residues His476 and Asp548.

It in the central section; belongs to the AAA ATPase family. In the C-terminal section; belongs to the peptidase M41 family. Homohexamer. The cofactor is Zn(2+).

It is found in the cell inner membrane. Functionally, acts as a processive, ATP-dependent zinc metallopeptidase for both cytoplasmic and membrane proteins. Plays a role in the quality control of integral membrane proteins. The polypeptide is ATP-dependent zinc metalloprotease FtsH (Pelodictyon phaeoclathratiforme (strain DSM 5477 / BU-1)).